The primary structure comprises 237 residues: High-affinity branched-chain amino acid transport ATP-binding protein LivF (237 aa).

In terms of domain architecture, ABC transporter spans L6 to G237. G38 to T45 contributes to the ATP binding site.

The protein belongs to the ABC transporter superfamily.

In terms of biological role, component of the high-affinity branched-chain amino acid transport system. The polypeptide is High-affinity branched-chain amino acid transport ATP-binding protein LivF (livF) (Salmonella typhi).